A 644-amino-acid polypeptide reads, in one-letter code: Exoribonuclease 2 (644 aa).

Residues 189–516 (REDLTALDFV…NHRLLKAVIK (328 aa)) enclose the RNB domain. Residues 561-643 (DTRFAAEIVD…ETRSIIARPV (83 aa)) enclose the S1 motif domain.

Belongs to the RNR ribonuclease family. RNase II subfamily.

The protein localises to the cytoplasm. The catalysed reaction is Exonucleolytic cleavage in the 3'- to 5'-direction to yield nucleoside 5'-phosphates.. Its function is as follows. Involved in mRNA degradation. Hydrolyzes single-stranded polyribonucleotides processively in the 3' to 5' direction. In Escherichia coli O8 (strain IAI1), this protein is Exoribonuclease 2.